The primary structure comprises 762 residues: Protein PHTF1 (762 aa).

The 145-residue stretch at 6-150 (RDAISWYQKK…VHCQIVSTQI (145 aa)) folds into the PHTF domain. The next 3 membrane-spanning stretches (helical) occupy residues 77-97 (GLVR…VTSL), 99-119 (IFVW…LYLM), and 121-141 (PIVN…MGTV). The segment at 152–184 (RPSGNNGNRRRRKLRKTVNGDGSRENGNNSSDK) is disordered. N-linked (GlcNAc...) asparagine glycans are attached at residues N179 and N180. Phosphoserine is present on residues S272, S276, S277, S334, and S336. Disordered regions lie at residues 344–380 (SAAF…ETED) and 393–415 (RSSV…TKRD). The span at 348-361 (SQGSRSGVSGGSRS) shows a compositional bias: low complexity. N-linked (GlcNAc...) asparagine glycosylation occurs at N363. The span at 365-376 (SRRDSESTRHDS) shows a compositional bias: basic and acidic residues. The N-linked (GlcNAc...) asparagine glycan is linked to N431. Transmembrane regions (helical) follow at residues 473 to 493 (GVGY…FPFL), 512 to 532 (EILT…LSII), 611 to 631 (VVVS…CAQV), and 645 to 665 (WEFL…ASLG). N-linked (GlcNAc...) asparagine glycans are attached at residues N674 and N733. The helical transmembrane segment at 737 to 757 (VVILSAVSGVISDLLGFNIRL) threads the bilayer.

As to quaternary structure, interacts with FEM1B. In terms of tissue distribution, widely expressed with highest levels in testis.

The protein resides in the endoplasmic reticulum membrane. The protein localises to the golgi apparatus. It is found in the cis-Golgi network membrane. The sequence is that of Protein PHTF1 from Homo sapiens (Human).